The chain runs to 890 residues: Alanine--tRNA ligase (890 aa).

The Zn(2+) site is built by His573, His577, Cys676, and His680.

The protein belongs to the class-II aminoacyl-tRNA synthetase family. The cofactor is Zn(2+).

The protein resides in the cytoplasm. The enzyme catalyses tRNA(Ala) + L-alanine + ATP = L-alanyl-tRNA(Ala) + AMP + diphosphate. Its function is as follows. Catalyzes the attachment of alanine to tRNA(Ala) in a two-step reaction: alanine is first activated by ATP to form Ala-AMP and then transferred to the acceptor end of tRNA(Ala). Also edits incorrectly charged Ser-tRNA(Ala) and Gly-tRNA(Ala) via its editing domain. The chain is Alanine--tRNA ligase from Corynebacterium efficiens (strain DSM 44549 / YS-314 / AJ 12310 / JCM 11189 / NBRC 100395).